We begin with the raw amino-acid sequence, 1091 residues long: Error-prone DNA polymerase (1091 aa).

The disordered stretch occupies residues 1–51 (MGWSNGPPSWAEMERVLNGKPRHAGVPAFDADGDVPRSRKRGAYQPPGRER).

It belongs to the DNA polymerase type-C family. DnaE2 subfamily.

It is found in the cytoplasm. It carries out the reaction DNA(n) + a 2'-deoxyribonucleoside 5'-triphosphate = DNA(n+1) + diphosphate. Functionally, DNA polymerase involved in damage-induced mutagenesis and translesion synthesis (TLS). It is not the major replicative DNA polymerase. This Mycobacterium bovis (strain ATCC BAA-935 / AF2122/97) protein is Error-prone DNA polymerase.